The sequence spans 238 residues: MNSNASNTPIAIGISQIFPCSYLDGQQEQLLVIQEETLDPILFDRLLAIGFRRSGSAIYKPRCPRCSACQPIRLPIKEFTPSKRQKRTLAHNRDLTWRITSEHTEAQYALYEKYIRERHFDGPMFPPSKSQYEQFLFCHWLPATFIEVYDGNRLLAVAVTDTLPNSLSAIYSYFDPDEERRSLGSLLILLQCRLAKLQDKEFLYLGYQIDANRKMSYKRLYRPYQILTPQGWEYSQVC.

It belongs to the R-transferase family. Bpt subfamily.

It is found in the cytoplasm. It catalyses the reaction N-terminal L-glutamyl-[protein] + L-leucyl-tRNA(Leu) = N-terminal L-leucyl-L-glutamyl-[protein] + tRNA(Leu) + H(+). It carries out the reaction N-terminal L-aspartyl-[protein] + L-leucyl-tRNA(Leu) = N-terminal L-leucyl-L-aspartyl-[protein] + tRNA(Leu) + H(+). In terms of biological role, functions in the N-end rule pathway of protein degradation where it conjugates Leu from its aminoacyl-tRNA to the N-termini of proteins containing an N-terminal aspartate or glutamate. This is Aspartate/glutamate leucyltransferase from Shewanella sp. (strain MR-4).